A 78-amino-acid chain; its full sequence is Large ribosomal subunit protein bL28 (78 aa).

The protein belongs to the bacterial ribosomal protein bL28 family.

This chain is Large ribosomal subunit protein bL28, found in Francisella philomiragia subsp. philomiragia (strain ATCC 25017 / CCUG 19701 / FSC 153 / O#319-036).